The sequence spans 24 residues: Humanin-like 12 (24 aa).

The protein belongs to the humanin family.

It localises to the secreted. The protein resides in the cytoplasm. Functionally, plays a role as a neuroprotective and antiapoptotic factor. This is Humanin-like 12 from Homo sapiens (Human).